The sequence spans 286 residues: tRNA (guanine-N(7)-)-methyltransferase (286 aa).

Residues glycine 103, 126 to 127, 161 to 162, and cysteine 181 each bind S-adenosyl-L-methionine; these read EI and NA. Aspartate 184 is an active-site residue. Residue 259–261 participates in S-adenosyl-L-methionine binding; it reads TEE.

This sequence belongs to the class I-like SAM-binding methyltransferase superfamily. TrmB family. As to quaternary structure, forms a complex with TRM82.

It localises to the nucleus. The catalysed reaction is guanosine(46) in tRNA + S-adenosyl-L-methionine = N(7)-methylguanosine(46) in tRNA + S-adenosyl-L-homocysteine. Its pathway is tRNA modification; N(7)-methylguanine-tRNA biosynthesis. In terms of biological role, catalyzes the formation of N(7)-methylguanine at position 46 (m7G46) in tRNA. This is tRNA (guanine-N(7)-)-methyltransferase from Vanderwaltozyma polyspora (strain ATCC 22028 / DSM 70294 / BCRC 21397 / CBS 2163 / NBRC 10782 / NRRL Y-8283 / UCD 57-17) (Kluyveromyces polysporus).